A 129-amino-acid chain; its full sequence is Small ribosomal subunit protein uS11 (129 aa).

The protein belongs to the universal ribosomal protein uS11 family. As to quaternary structure, part of the 30S ribosomal subunit. Interacts with proteins S7 and S18. Binds to IF-3.

Located on the platform of the 30S subunit, it bridges several disparate RNA helices of the 16S rRNA. Forms part of the Shine-Dalgarno cleft in the 70S ribosome. In Aromatoleum aromaticum (strain DSM 19018 / LMG 30748 / EbN1) (Azoarcus sp. (strain EbN1)), this protein is Small ribosomal subunit protein uS11.